The sequence spans 298 residues: Max-like protein X (298 aa).

The segment at 1–63 is disordered; sequence MTEPGASPED…ARGCREDSSH (63 aa). The residue at position 7 (Ser7) is a Phosphoserine. The span at 28–37 shows a compositional bias: basic residues; it reads GRARARRGSG. A phosphoserine mark is found at Ser45, Ser48, Ser74, Ser77, and Ser98. Residues 98–109 are compositionally biased toward polar residues; that stretch reads SIGSTSASSVPN. A disordered region spans residues 98–119; it reads SIGSTSASSVPNTDDEDSDYQQ. Positions 129-187 constitute a bHLH domain; that stretch reads RRRRAHTQAEQKRRDAIKRGYDDLQTIVPTCQQQDFSIGSQKLSKAIVLQKTIDYIQFL. A leucine-zipper region spans residues 194–214; that stretch reads QEEEVSTLRKDVTALKIMKVN.

In terms of assembly, efficient DNA binding requires dimerization with another bHLH protein. Binds DNA as a heterodimer with MAD1, MAD4, MNT, WBSCR14 and MLXIP. Can also bind DNA as a homodimer. In terms of tissue distribution, expressed in all tissues examined: stomach, duodenum, jejunum, ileum, colon, liver, pancreas, salivary gland, kidney, spleen, lung, heart, skeletal muscle, brain, ovary and testis.

It localises to the cytoplasm. Its subcellular location is the nucleus. Functionally, transcription regulator. Forms a sequence-specific DNA-binding protein complex with MAD1, MAD4, MNT, WBSCR14 and MLXIP which recognizes the core sequence 5'-CACGTG-3'. The TCFL4-MAD1, TCFL4-MAD4, TCFL4-WBSCR14 complexes are transcriptional repressors. Plays a role in transcriptional activation of glycolytic target genes. Involved in glucose-responsive gene regulation. In Mus musculus (Mouse), this protein is Max-like protein X (Mlx).